Here is a 793-residue protein sequence, read N- to C-terminus: uncharacterized protein (793 aa).

Positions methionine 1–alanine 21 are cleaved as a signal peptide. Cysteine 769 and cysteine 792 are oxidised to a cystine.

Belongs to the fimbrial export usher family.

The protein resides in the cell outer membrane. In terms of biological role, involved in the export and assembly of a fimbrial subunit across the outer membrane. This is an uncharacterized protein from Escherichia coli (strain K12).